A 42-amino-acid polypeptide reads, in one-letter code: Lebocin-like anionic peptide 1 (42 aa).

Hemolymph.

The protein resides in the secreted. Functionally, antimicrobial protein. Has antibacterial activity against the Gram-positive bacteria M.luteus (MIC=22.7 uM) and L.monocytogenes (MIC=90.9 uM). Lacks antibacterial activity against the Gram-positive bacteria B.circulans, S.aureus, and S.lutea, and the Gram-negative bacteria E.coli D31, E.coli ATCC 25922, and S.typhimurium. Has antifungal activity against A.niger (MIC=90.9 uM) and T.harzianum (MIC=90.9 uM), but lacks antifungal activity against S.cerevisiae, P.pastoris, Z.marxianus, C.albicans, C.fructus, and F.oxysporum. This is Lebocin-like anionic peptide 1 from Galleria mellonella (Greater wax moth).